The primary structure comprises 299 residues: ATP synthase gamma chain (299 aa).

Belongs to the ATPase gamma chain family. As to quaternary structure, F-type ATPases have 2 components, CF(1) - the catalytic core - and CF(0) - the membrane proton channel. CF(1) has five subunits: alpha(3), beta(3), gamma(1), delta(1), epsilon(1). CF(0) has three main subunits: a, b and c.

The protein resides in the cell membrane. In terms of biological role, produces ATP from ADP in the presence of a proton gradient across the membrane. The gamma chain is believed to be important in regulating ATPase activity and the flow of protons through the CF(0) complex. This chain is ATP synthase gamma chain, found in Leifsonia xyli subsp. xyli (strain CTCB07).